Consider the following 452-residue polypeptide: MDDIFTQCREGNAVAVRLWLDNTENDLNQGDDHGFSPLHWACREGRSAVVEMLIMRGARINVMNRGDDTPLHLAASHGHRDIVQKLLQYKADINAVNEHGNVPLHYACFWGQDQVAEDLVANGALVSICNKYGEMPVDKAKAPLRELLRERAEKMGQNLNRIPYKDTFWKGTTRTRPRNGTLNKHSGIDFKQLNFLTKLNENHSGELWKGRWQGNDIVVKVLKVRDWSTRKSRDFNEECPRLRIFSHPNVLPVLGACQSPPAPHPTLITHWMPYGSLYNVLHEGTNFVVDQSQAVKFALDMARGMAFLHTLEPLIPRHALNSRSVMIDEDMTARISMADVKFSFQCPGRMYAPAWVAPEALQKKPEDTNRRSADMWSFAVLLWELVTREVPFADLSNMEIGMKVALEGLRPTIPPGISPHVCKLMKICMNEDPAKRPKFDMIVPILEKMQDK.

The residue at position 1 (methionine 1) is an N-acetylmethionine. ANK repeat units follow at residues 2 to 30 (DDIF…LNQG), 31 to 63 (DDHG…INVM), 64 to 96 (NRGD…INAV), 97 to 129 (NEHG…VSIC), and 130 to 174 (NKYG…GTTR). Residues 33-139 (HGFSPLHWAC…NKYGEMPVDK (107 aa)) form an interaction with LIMS1 region. A Phosphothreonine; by PAK1 modification is found at threonine 173. The PH-like; mediates interaction with TGFB1I1 stretch occupies residues 180 to 212 (GTLNKHSGIDFKQLNFLTKLNENHSGELWKGRW). The residue at position 186 (serine 186) is a Phosphoserine. The region spanning 193–446 (LNFLTKLNEN…PKFDMIVPIL (254 aa)) is the Protein kinase domain. Residues asparagine 200, asparagine 202, histidine 203, serine 204, and lysine 220 each contribute to the ATP site. Phosphoserine; by PAK1 is present on serine 246. ATP is bound by residues histidine 270, methionine 272, and asparagine 279. Residue aspartate 339 participates in Mg(2+) binding. ATP is bound at residue lysine 341. The short motif at 363 to 371 (KKPEDTNRR) is the Nuclear localization signal element. The residue at position 426 (lysine 426) is an N6-acetyllysine.

The protein belongs to the protein kinase superfamily. TKL Ser/Thr protein kinase family. As to quaternary structure, component of the heterotrimeric IPP (ILK-PINCH-PARVIN) complex composed of ILK, LIMS1/PINCH and PARVA; the complex binds to F-actin via the C-terminal tail of LIMS1 and the N-terminal region of PARVA, promoting F-actin filament bundling. Formation of the IPP complex is dependent on protein kinase C and precedes integrin-mediated cell adhesion and spreading. ILK also interacts with LIMS2/PINCH2 and with PARVB and PARVG which may substitute for LIMS1 and PARVA in the IPP complex; PARVA and PARVB compete for the same binding site. Interaction with PARVG promotes the establishment of cell polarity required for leukocyte migration. Interacts with the cytoplasmic domain of integrin ITGB1 and may also interact with integrins ITGB2, ITGB3 and/or ITGB5. Interacts probably also with TGFB1I1. Interacts (via ANK repeats) with EPHA1 (via SAM domain); stimulated by EFNA1 but independent of the kinase activity of EPHA1. Interacts with FERMT2. Interacts with LIMD2; leading to activate the protein kinase activity. Interacts with PXN/PAXILLIN (via LD motif 4). Interacts with CCDC25 (via cytoplasmic region); initiating the ILK-PARVB cascade to induce cytoskeleton rearrangement and directional migration of cells. Interacts with IQGAP1; the interaction is required for localization of IQGAP1 to the cell cortex. Phosphorylation by PAK1 modulates ILK subcellular location by promoting its nuclear export. As to expression, highly expressed in heart followed by skeletal muscle, pancreas and kidney. Weakly expressed in placenta, lung and liver.

Its subcellular location is the cell junction. It is found in the focal adhesion. The protein resides in the cell membrane. It localises to the cell projection. The protein localises to the lamellipodium. Its subcellular location is the cytoplasm. It is found in the myofibril. The protein resides in the sarcomere. It localises to the nucleus. The protein localises to the cytoskeleton. Its subcellular location is the microtubule organizing center. It is found in the centrosome. The protein resides in the cell cortex. Its function is as follows. Scaffold protein which mediates protein-protein interactions during a range of cellular events including focal adhesion assembly, cell adhesion and cell migration. Regulates integrin-mediated signal transduction by contributing to inside-out integrin activation. Recruits PARVA and LIMS1/PITCH to form the heterotrimeric IPP (ILK-PINCH-PARVIN) complex which binds to F-actin via the C-terminal tail of LIMS1 and the N-terminal region of PARVA, promoting F-actin filament bundling, a process required to generate force for actin cytoskeleton reorganization and subsequent dynamic cell adhesion events such as cell spreading and migration. Binding to PARVA promotes effective assembly of ILK into focal adhesions while PARVA-bound ILK can simultaneously engage integrin-beta cytoplasmic tails to mediate cell adhesion. Plays a role with PARVG in promoting the cell adhesion and spreading of leukocytes. Acts as an upstream effector of both AKT1/PKB and GSK3. Mediates trafficking of caveolae to the cell surface in an ITGB1-dependent manner by promoting the recruitment of IQGAP1 to the cell cortex which cooperates with its effector DIAPH1 to locally stabilize microtubules and allow stable insertion of caveolae into the plasma membrane. Required for the maintenance of mitotic spindle integrity by promoting phosphorylation of TACC3 by AURKA. Associates with chromatin and may act as a negative regulator of transcription when located in the nucleus. In Homo sapiens (Human), this protein is Scaffold protein ILK.